The following is a 545-amino-acid chain: Mesoderm induction early response protein 2 (545 aa).

Ser-11 bears the Phosphoserine mark. Positions 100-189 (DPISDRESEG…SSDTEEDSLP (90 aa)) are disordered. Polar residues predominate over residues 140–153 (QSSADDLTPSVTSH). Residues 195–292 (KEIMVGPQFQ…EALRRLRFNV (98 aa)) form the ELM2 domain. One can recognise an SANT domain in the interval 297–349 (DGLCAWSEEECRNFEHGFRVHGKNFHLIQANKVRTRSVGECVEYYYLWKKSER). The tract at residues 364–464 (YVPSGTTDAD…YQPAVTAPEP (101 aa)) is disordered.

In terms of assembly, part of a complex containing at least CDYL, MIER1, MIER2, HDAC1 and HDAC2.

Its subcellular location is the nucleus. Transcriptional repressor. This chain is Mesoderm induction early response protein 2 (MIER2), found in Homo sapiens (Human).